Here is a 292-residue protein sequence, read N- to C-terminus: MKDRLQELKQKTKEIELSRDGQVFVEEEQGVLVQQAVIYEREPVAERHLHEIQKLQENINSFVDDVQRFGQQQKSLVASMRRFSLLKRDSTIAKEIKIQAEHINRALGDVVKEVKKSEVENGPSSVVTRILKSQYAAMFRRFQQTMFLYNDTIALKQEKCKTFIVRQLEVAGKEVSEEEVNDMLHHGKWEVFNESLLTETSITKAQLSEIEQRHKELVNLENQVKDLRDLFIQISLLVEEQGESINSIEVMVNSTKDYVNNTKEKFGLAVKYKKRNPCRALCCCCCPRCGSK.

Positions 207–269 constitute a t-SNARE coiled-coil homology domain; sequence LSEIEQRHKE…NNTKEKFGLA (63 aa).

The protein belongs to the syntaxin family. In terms of assembly, interacts with EGFR. Expressed in stomach, lung and skin (at protein level). In stomach, strongly expressed in the mucosa of the fundus, in epithelial cells of gastric pits, and in gastric glands (at protein level). In skin, expressed in the epidermis, dermis, and epithelial layer of the hair bulb (at protein level).

The protein localises to the cell membrane. The protein resides in the cytoplasm. In terms of biological role, plays a role in endosomal trafficking of the epidermal growth factor receptor (EGFR). The polypeptide is Syntaxin-19 (Mus musculus (Mouse)).